Reading from the N-terminus, the 305-residue chain is tRNA pseudouridine synthase B (305 aa).

The active-site Nucleophile is aspartate 39.

Belongs to the pseudouridine synthase TruB family. Type 1 subfamily.

The catalysed reaction is uridine(55) in tRNA = pseudouridine(55) in tRNA. Responsible for synthesis of pseudouridine from uracil-55 in the psi GC loop of transfer RNAs. This Staphylococcus aureus (strain Mu50 / ATCC 700699) protein is tRNA pseudouridine synthase B.